The sequence spans 382 residues: Mannitol-1-phosphate 5-dehydrogenase (382 aa).

3 to 14 (ALHFGAGNIGRG) is a binding site for NAD(+). Position 269 is an N6-acetyllysine (K269).

It belongs to the mannitol dehydrogenase family.

It carries out the reaction D-mannitol 1-phosphate + NAD(+) = beta-D-fructose 6-phosphate + NADH + H(+). The polypeptide is Mannitol-1-phosphate 5-dehydrogenase (Shigella sonnei (strain Ss046)).